The primary structure comprises 492 residues: Bifunctional protein GlmU (492 aa).

The pyrophosphorylase stretch occupies residues 1–241 (MTFRGDTAVV…SALVAGVNDR (241 aa)). UDP-N-acetyl-alpha-D-glucosamine-binding positions include 12-15 (LAAG), lysine 26, glutamine 83, and 88-89 (GT). Aspartate 114 contacts Mg(2+). UDP-N-acetyl-alpha-D-glucosamine is bound by residues glycine 151, glutamate 166, asparagine 181, and asparagine 239. Asparagine 239 is a Mg(2+) binding site. The tract at residues 242–262 (VQLAQLGAELNRRIVAAHQMA) is linker. The interval 263–492 (GVTVIDPATT…TPPPDADHPP (230 aa)) is N-acetyltransferase. Residues arginine 344 and lysine 362 each coordinate UDP-N-acetyl-alpha-D-glucosamine. The Proton acceptor role is filled by histidine 374. 2 residues coordinate UDP-N-acetyl-alpha-D-glucosamine: tyrosine 377 and asparagine 388. Acetyl-CoA-binding positions include alanine 391, 397-398 (NY), and alanine 434. The segment at 443–492 (PPGALAVSGGPQRNIEDWVQQKRPGTPSAEAARKASAEQSTPPPDADHPP) is disordered.

It in the N-terminal section; belongs to the N-acetylglucosamine-1-phosphate uridyltransferase family. The protein in the C-terminal section; belongs to the transferase hexapeptide repeat family. As to quaternary structure, homotrimer. Requires Mg(2+) as cofactor.

Its subcellular location is the cytoplasm. It carries out the reaction alpha-D-glucosamine 1-phosphate + acetyl-CoA = N-acetyl-alpha-D-glucosamine 1-phosphate + CoA + H(+). The catalysed reaction is N-acetyl-alpha-D-glucosamine 1-phosphate + UTP + H(+) = UDP-N-acetyl-alpha-D-glucosamine + diphosphate. It functions in the pathway nucleotide-sugar biosynthesis; UDP-N-acetyl-alpha-D-glucosamine biosynthesis; N-acetyl-alpha-D-glucosamine 1-phosphate from alpha-D-glucosamine 6-phosphate (route II): step 2/2. It participates in nucleotide-sugar biosynthesis; UDP-N-acetyl-alpha-D-glucosamine biosynthesis; UDP-N-acetyl-alpha-D-glucosamine from N-acetyl-alpha-D-glucosamine 1-phosphate: step 1/1. Its pathway is bacterial outer membrane biogenesis; LPS lipid A biosynthesis. In terms of biological role, catalyzes the last two sequential reactions in the de novo biosynthetic pathway for UDP-N-acetylglucosamine (UDP-GlcNAc). The C-terminal domain catalyzes the transfer of acetyl group from acetyl coenzyme A to glucosamine-1-phosphate (GlcN-1-P) to produce N-acetylglucosamine-1-phosphate (GlcNAc-1-P), which is converted into UDP-GlcNAc by the transfer of uridine 5-monophosphate (from uridine 5-triphosphate), a reaction catalyzed by the N-terminal domain. This Mycobacterium ulcerans (strain Agy99) protein is Bifunctional protein GlmU.